We begin with the raw amino-acid sequence, 122 residues long: Large ribosomal subunit protein bL12 (122 aa).

The protein belongs to the bacterial ribosomal protein bL12 family. As to quaternary structure, homodimer. Part of the ribosomal stalk of the 50S ribosomal subunit. Forms a multimeric L10(L12)X complex, where L10 forms an elongated spine to which 2 to 4 L12 dimers bind in a sequential fashion. Binds GTP-bound translation factors.

Forms part of the ribosomal stalk which helps the ribosome interact with GTP-bound translation factors. Is thus essential for accurate translation. The protein is Large ribosomal subunit protein bL12 of Pseudomonas aeruginosa (strain LESB58).